We begin with the raw amino-acid sequence, 265 residues long: Undecaprenyl-diphosphatase 1 (265 aa).

7 consecutive transmembrane segments (helical) span residues 4–24, 42–62, 84–104, 108–128, 184–204, 217–237, and 245–265; these read IIIA…PISS, AKTF…ILYH, FHVF…HDVI, LFQP…MILA, SEFS…LDLL, MFAV…VTFL, and LKPF…FVLL.

The protein belongs to the UppP family.

The protein resides in the cell membrane. It catalyses the reaction di-trans,octa-cis-undecaprenyl diphosphate + H2O = di-trans,octa-cis-undecaprenyl phosphate + phosphate + H(+). Catalyzes the dephosphorylation of undecaprenyl diphosphate (UPP). Confers resistance to bacitracin. In Bacillus cereus (strain ZK / E33L), this protein is Undecaprenyl-diphosphatase 1.